A 293-amino-acid chain; its full sequence is Protease HtpX homolog (293 aa).

2 helical membrane passes run 5-25 (IFLF…TLRL) and 43-63 (ALLV…LAMS). H148 provides a ligand contact to Zn(2+). E149 is a catalytic residue. H152 contacts Zn(2+). The next 2 helical transmembrane spans lie at 159 to 179 (VTLA…SRII) and 199 to 219 (FVTS…IVMW). Zn(2+) is bound at residue E225.

This sequence belongs to the peptidase M48B family. Zn(2+) serves as cofactor.

The protein localises to the cell inner membrane. The sequence is that of Protease HtpX homolog from Nitrosomonas europaea (strain ATCC 19718 / CIP 103999 / KCTC 2705 / NBRC 14298).